Here is a 339-residue protein sequence, read N- to C-terminus: tRNA pseudouridine synthase D (339 aa).

D80 acts as the Nucleophile in catalysis. The region spanning G155 to L311 is the TRUD domain.

It belongs to the pseudouridine synthase TruD family.

The catalysed reaction is uridine(13) in tRNA = pseudouridine(13) in tRNA. In terms of biological role, responsible for synthesis of pseudouridine from uracil-13 in transfer RNAs. The chain is tRNA pseudouridine synthase D from Haemophilus influenzae (strain PittEE).